The following is a 452-amino-acid chain: Phosphoglucosamine mutase (452 aa).

Catalysis depends on serine 101, which acts as the Phosphoserine intermediate. Mg(2+) contacts are provided by serine 101, aspartate 241, aspartate 243, and aspartate 245. Serine 101 bears the Phosphoserine mark.

This sequence belongs to the phosphohexose mutase family. Requires Mg(2+) as cofactor. In terms of processing, activated by phosphorylation.

It carries out the reaction alpha-D-glucosamine 1-phosphate = D-glucosamine 6-phosphate. In terms of biological role, catalyzes the conversion of glucosamine-6-phosphate to glucosamine-1-phosphate. The protein is Phosphoglucosamine mutase of Lactococcus lactis subsp. cremoris (strain SK11).